The primary structure comprises 141 residues: Hemoglobin subunit alpha-D (141 aa).

The Globin domain maps to 1 to 141; the sequence is MLTAEDKKLI…VAAVLAEKYR (141 aa). His58 and His87 together coordinate heme b.

The protein belongs to the globin family. Heterotetramer of two alpha-D chains and two beta chains. In terms of tissue distribution, red blood cells.

Its function is as follows. Involved in oxygen transport from the lung to the various peripheral tissues. This Anas platyrhynchos (Mallard) protein is Hemoglobin subunit alpha-D (HBAD).